A 398-amino-acid chain; its full sequence is Cell division protein FtsZ (398 aa).

Residues 21-25 (GGGGN), 108-110 (GTG), Glu139, Arg143, and Asp187 each bind GTP.

Belongs to the FtsZ family. As to quaternary structure, homodimer. Polymerizes to form a dynamic ring structure in a strictly GTP-dependent manner. Interacts directly with several other division proteins.

The protein resides in the cytoplasm. In terms of biological role, essential cell division protein that forms a contractile ring structure (Z ring) at the future cell division site. The regulation of the ring assembly controls the timing and the location of cell division. One of the functions of the FtsZ ring is to recruit other cell division proteins to the septum to produce a new cell wall between the dividing cells. Binds GTP and shows GTPase activity. The polypeptide is Cell division protein FtsZ (Pseudomonas putida (strain ATCC 47054 / DSM 6125 / CFBP 8728 / NCIMB 11950 / KT2440)).